Reading from the N-terminus, the 54-residue chain is MHTPIGVKPVAGSKEWREAWQKRAFAHISNGYKHIYIAINSPEIFLLVCFLIRI.

Belongs to the YojO family.

This is an uncharacterized protein from Escherichia coli O6:K15:H31 (strain 536 / UPEC).